The sequence spans 106 residues: Large ribosomal subunit protein bL21 (106 aa).

Belongs to the bacterial ribosomal protein bL21 family. In terms of assembly, part of the 50S ribosomal subunit. Contacts protein L20.

Its function is as follows. This protein binds to 23S rRNA in the presence of protein L20. This Streptomyces coelicolor (strain ATCC BAA-471 / A3(2) / M145) protein is Large ribosomal subunit protein bL21.